Consider the following 730-residue polypeptide: Elongation factor 2 (730 aa).

One can recognise a tr-type G domain in the interval 19–228 (TKIRNIGIVA…TGVSFKDVYD (210 aa)). GTP is bound by residues 28-35 (AHIDHGKT), 94-98 (DTPGH), and 148-151 (NKVD). Residue histidine 596 is modified to Diphthamide.

Belongs to the TRAFAC class translation factor GTPase superfamily. Classic translation factor GTPase family. EF-G/EF-2 subfamily.

The protein localises to the cytoplasm. Its function is as follows. Catalyzes the GTP-dependent ribosomal translocation step during translation elongation. During this step, the ribosome changes from the pre-translocational (PRE) to the post-translocational (POST) state as the newly formed A-site-bound peptidyl-tRNA and P-site-bound deacylated tRNA move to the P and E sites, respectively. Catalyzes the coordinated movement of the two tRNA molecules, the mRNA and conformational changes in the ribosome. This Methanosarcina barkeri (strain Fusaro / DSM 804) protein is Elongation factor 2.